The sequence spans 962 residues: Glycine dehydrogenase (decarboxylating) (962 aa).

Lys709 carries the N6-(pyridoxal phosphate)lysine modification.

It belongs to the GcvP family. In terms of assembly, the glycine cleavage system is composed of four proteins: P, T, L and H. Pyridoxal 5'-phosphate serves as cofactor.

It carries out the reaction N(6)-[(R)-lipoyl]-L-lysyl-[glycine-cleavage complex H protein] + glycine + H(+) = N(6)-[(R)-S(8)-aminomethyldihydrolipoyl]-L-lysyl-[glycine-cleavage complex H protein] + CO2. The glycine cleavage system catalyzes the degradation of glycine. The P protein binds the alpha-amino group of glycine through its pyridoxal phosphate cofactor; CO(2) is released and the remaining methylamine moiety is then transferred to the lipoamide cofactor of the H protein. This Shewanella baltica (strain OS155 / ATCC BAA-1091) protein is Glycine dehydrogenase (decarboxylating).